We begin with the raw amino-acid sequence, 292 residues long: Probable E3 ubiquitin-protein ligase RNF144A (292 aa).

The interval Pro-16–Leu-236 is TRIAD supradomain. Residues Cys-20, Cys-23, Cys-43, Cys-46, Cys-111, Cys-116, Cys-135, Cys-138, Cys-143, Cys-146, His-151, Cys-156, Cys-185, and Cys-188 each coordinate Zn(2+). The RING-type 1 zinc finger occupies Cys-20–Cys-70. The IBR-type zinc-finger motif lies at Gln-91–Cys-156. An RING-type 2; atypical zinc finger spans residues Cys-185–Cys-214. Cys-198 is an active-site residue. Zn(2+)-binding residues include Cys-203, Cys-206, Cys-211, Cys-214, His-226, and Cys-232. The helical transmembrane segment at Val-250–Leu-270 threads the bilayer.

This sequence belongs to the RBR family. RNF144 subfamily.

The protein localises to the membrane. It carries out the reaction [E2 ubiquitin-conjugating enzyme]-S-ubiquitinyl-L-cysteine + [acceptor protein]-L-lysine = [E2 ubiquitin-conjugating enzyme]-L-cysteine + [acceptor protein]-N(6)-ubiquitinyl-L-lysine.. It functions in the pathway protein modification; protein ubiquitination. Its function is as follows. E3 ubiquitin-protein ligase which accepts ubiquitin from E2 ubiquitin-conjugating enzymes ube2l3 and ube2l6 in the form of a thioester and then directly transfers the ubiquitin to targeted substrates. The polypeptide is Probable E3 ubiquitin-protein ligase RNF144A (rnf144a) (Xenopus tropicalis (Western clawed frog)).